Reading from the N-terminus, the 91-residue chain is Signal recognition particle 19 kDa protein (91 aa).

Belongs to the SRP19 family. As to quaternary structure, part of the signal recognition particle protein translocation system, which is composed of SRP and FtsY. Archaeal SRP consists of a 7S RNA molecule of 300 nucleotides and two protein subunits: SRP54 and SRP19.

The protein localises to the cytoplasm. Its function is as follows. Involved in targeting and insertion of nascent membrane proteins into the cytoplasmic membrane. Binds directly to 7S RNA and mediates binding of the 54 kDa subunit of the SRP. This Methanothermobacter thermautotrophicus (strain ATCC 29096 / DSM 1053 / JCM 10044 / NBRC 100330 / Delta H) (Methanobacterium thermoautotrophicum) protein is Signal recognition particle 19 kDa protein.